The sequence spans 217 residues: Large ribosomal subunit protein bL25 (217 aa).

The interval Thr-185 to Glu-217 is disordered. The segment covering Val-189–Glu-217 has biased composition (acidic residues).

This sequence belongs to the bacterial ribosomal protein bL25 family. CTC subfamily. Part of the 50S ribosomal subunit; part of the 5S rRNA/L5/L18/L25 subcomplex. Contacts the 5S rRNA. Binds to the 5S rRNA independently of L5 and L18.

In terms of biological role, this is one of the proteins that binds to the 5S RNA in the ribosome where it forms part of the central protuberance. This chain is Large ribosomal subunit protein bL25, found in Desulfosudis oleivorans (strain DSM 6200 / JCM 39069 / Hxd3) (Desulfococcus oleovorans).